Here is a 217-residue protein sequence, read N- to C-terminus: 3,4-dihydroxy-2-butanone 4-phosphate synthase (217 aa).

Residues 37 to 38 (RE), D42, 150 to 154 (RRGHT), and E174 each bind D-ribulose 5-phosphate. E38 is a Mg(2+) binding site. Mg(2+) is bound at residue H153.

Belongs to the DHBP synthase family. Homodimer. It depends on Mg(2+) as a cofactor. The cofactor is Mn(2+).

The enzyme catalyses D-ribulose 5-phosphate = (2S)-2-hydroxy-3-oxobutyl phosphate + formate + H(+). It participates in cofactor biosynthesis; riboflavin biosynthesis; 2-hydroxy-3-oxobutyl phosphate from D-ribulose 5-phosphate: step 1/1. Functionally, catalyzes the conversion of D-ribulose 5-phosphate to formate and 3,4-dihydroxy-2-butanone 4-phosphate. The polypeptide is 3,4-dihydroxy-2-butanone 4-phosphate synthase (Desulforapulum autotrophicum (strain ATCC 43914 / DSM 3382 / VKM B-1955 / HRM2) (Desulfobacterium autotrophicum)).